A 101-amino-acid polypeptide reads, in one-letter code: Osteocalcin (101 aa).

The signal sequence occupies residues 1–18 (MKLAIVLLLLGLAVLCLG). A propeptide spanning residues 19-52 (GKDSQHSASAGDSRSSEAFISRQDSANFARRHKR) is cleaved from the precursor. The Gla domain maps to 53–99 (SYRYNVARGAAVTSPLESQREVCELNPDCDELADHIGFQEAYRRFYG). Residues glutamate 69, glutamate 73, glutamate 76, and aspartate 82 each coordinate Ca(2+). 4-carboxyglutamate occurs at positions 69, 73, and 76. Cysteine 75 and cysteine 81 are disulfide-bonded.

Belongs to the osteocalcin/matrix Gla protein family. In terms of processing, gamma-carboxyglutamate residues are formed by vitamin K dependent carboxylation by GGCX. These residues are essential for the binding of calcium.

Its subcellular location is the secreted. Functionally, the carboxylated form is one of the main organic components of the bone matrix, which constitutes 1-2% of the total bone protein. The carboxylated form binds strongly to apatite and calcium. The chain is Osteocalcin (bglap) from Xenopus tropicalis (Western clawed frog).